Here is an 856-residue protein sequence, read N- to C-terminus: Rab effector MyRIP (856 aa).

Positions 4-124 constitute a RabBD domain; the sequence is KLDLSGLTDD…TQSLEWFYNN (121 aa). The segment at 63–105 adopts an FYVE-type zinc-finger fold; the sequence is CCMRCCSPFTFLVNARRRCGECKFSVCKSCCSYQKHEKLWVCC. Positions 143-560 are myosin-binding; the sequence is RKHRLESGAC…AQVSDNVSET (418 aa). A PRKAR2A-binding region spans residues 193–209; it reads VALRVAEEAIEEAISKA. The tract at residues 232–248 is negative regulation of PRKAR2A-binding; that stretch reads LTEELAGTILQRIIRKQ. The interval 252 to 294 is disordered; it reads AELRAEEEEPEWPRSQSGSVKARGEGTTAPPGRHKARATFRRS. 2 positions are modified to phosphoserine: Ser-299 and Ser-351. 4 disordered regions span residues 351 to 578, 592 to 625, 778 to 806, and 826 to 856; these read SPDG…SVEE, SEKE…NNQG, RRDQ…PPVK, and LLQG…AVMY. Over residues 395–405 the composition is skewed to acidic residues; the sequence is IGSDSEEDFDY. Composition is skewed to low complexity over residues 427–437 and 450–460; these read PTQAQSSGQGP and SDSETSSTSSS. The interval 495 to 856 is actin-binding; that stretch reads FNPQAAGGET…EPDLESAVMY (362 aa). Polar residues-rich tracts occupy residues 551-574, 613-625, 784-793, and 826-840; these read AQVS…SSTD, QKGS…NNQG, RSQVQTIDTS, and LLQG…ASTG.

Binds RAB27A that has been activated by GTP-binding via its N-terminus. Binds MYO5A, MYO7A and F-actin. Interacts with PRKAR2A. Interacts with components of the exocyst complex, including EXOC3 and EXOC4. Detected in brain, skin, heart, lung, adrenal medulla, pancreas, intestine, liver, kidney, skeletal muscle and testis. Detected in cochlear and vestibular hair cells in the inner ear, and in photoreceptor and pigment epithelium cells in the retina.

It is found in the cytoplasm. The protein resides in the perinuclear region. It localises to the cytoplasmic vesicle. The protein localises to the secretory vesicle. Its subcellular location is the melanosome. Functionally, rab effector protein involved in melanosome transport. Serves as link between melanosome-bound RAB27A and the motor proteins MYO5A and MYO7A. May link RAB27A-containing vesicles to actin filaments. Functions as a protein kinase A-anchoring protein (AKAP). May act as a scaffolding protein that links PKA to components of the exocytosis machinery, thus facilitating exocytosis, including insulin release. The sequence is that of Rab effector MyRIP (Myrip) from Mus musculus (Mouse).